The sequence spans 257 residues: Type III pantothenate kinase (257 aa).

6–13 (DVGNTNTV) contributes to the ATP binding site. Residues tyrosine 102 and 109–112 (GADR) each bind substrate. The Proton acceptor role is filled by aspartate 111. Aspartate 131 is a K(+) binding site. Threonine 134 is a binding site for ATP. Position 186 (threonine 186) interacts with substrate.

It belongs to the type III pantothenate kinase family. In terms of assembly, homodimer. It depends on NH4(+) as a cofactor. Requires K(+) as cofactor.

Its subcellular location is the cytoplasm. It catalyses the reaction (R)-pantothenate + ATP = (R)-4'-phosphopantothenate + ADP + H(+). It functions in the pathway cofactor biosynthesis; coenzyme A biosynthesis; CoA from (R)-pantothenate: step 1/5. Its function is as follows. Catalyzes the phosphorylation of pantothenate (Pan), the first step in CoA biosynthesis. The protein is Type III pantothenate kinase of Leptospira borgpetersenii serovar Hardjo-bovis (strain JB197).